Here is a 283-residue protein sequence, read N- to C-terminus: Pantothenate synthetase (283 aa).

ATP is bound at residue 34–41; it reads MGALHDGH. His41 serves as the catalytic Proton donor. Gln65 provides a ligand contact to (R)-pantoate. Gln65 serves as a coordination point for beta-alanine. Position 152–155 (152–155) interacts with ATP; the sequence is GSKD. Gln158 contributes to the (R)-pantoate binding site. Residues Val181 and 189–192 each bind ATP; that span reads MSSR.

This sequence belongs to the pantothenate synthetase family. In terms of assembly, homodimer.

The protein resides in the cytoplasm. It catalyses the reaction (R)-pantoate + beta-alanine + ATP = (R)-pantothenate + AMP + diphosphate + H(+). It participates in cofactor biosynthesis; (R)-pantothenate biosynthesis; (R)-pantothenate from (R)-pantoate and beta-alanine: step 1/1. Its function is as follows. Catalyzes the condensation of pantoate with beta-alanine in an ATP-dependent reaction via a pantoyl-adenylate intermediate. The polypeptide is Pantothenate synthetase (Rhodopseudomonas palustris (strain ATCC BAA-98 / CGA009)).